Reading from the N-terminus, the 553-residue chain is MKSAQYSLVLLLGFTLLYLLPLEFRALWQPDETRYAEISREMLSAGNWIVPHFLDVRYFEKPVAGYWINNLSQMIFGHNNFSVRFGAVFSTTLSALMVAWLAFRLWRDKTVAVLSGVIFLTCLLVYGVGTYAVLDPMITLWLVAAMCSFWLGANAQTRAGKAGGYILLGLACGMGVMTKGFLALAVPVLGVLPWVIAQKRWKEVLLFGPLAIISATLITLPWALAIAKAEPTFWHYFFWVEHIQRFAENDAQHKAPFWYYIPFLIAGCLPWVALLPGALKRSWNERHIESGTLYLLGWVVMPLLFFSIAKGKLPTYILPCFAPLAILLARHATQLVATPRTLKVNGWINTVFGAVCALIVLLVLAPWGIAKHPIYASHEVLKVIQASIAFLVWALVGYLTTRNNARLWQWAALCPLGIALLVGGMIPDKVVYSKHPQAFVDLVRPELESSRYILADSVGVGAGIAWEMKRSDITLYAKPGELDYGLTTFADAKDNFVSRDDFASWLALHRKEGNVSLVKLLSKDSVLEDSDVPAPDKVYHKGRFLLFFYEKTP.

12 helical membrane passes run 8 to 28 (LVLL…RALW), 83 to 103 (VRFG…WLAF), 111 to 131 (VAVL…VGTY), 132 to 152 (AVLD…FWLG), 176 to 196 (VMTK…PWVI), 204 to 224 (VLLF…PWAL), 255 to 275 (APFW…VALL), 288 to 308 (IESG…FFSI), 317 to 337 (ILPC…QLVA), 350 to 370 (TVFG…WGIA), 380 to 400 (VLKV…GYLT), and 407 to 427 (LWQW…GMIP).

It belongs to the glycosyltransferase 83 family.

The protein resides in the cell inner membrane. It catalyses the reaction 4-amino-4-deoxy-alpha-L-arabinopyranosyl di-trans,octa-cis-undecaprenyl phosphate + lipid IVA = lipid IIA + di-trans,octa-cis-undecaprenyl phosphate.. It functions in the pathway lipopolysaccharide metabolism; 4-amino-4-deoxy-beta-L-arabinose-lipid A biosynthesis. In terms of biological role, catalyzes the transfer of the L-Ara4N moiety of the glycolipid undecaprenyl phosphate-alpha-L-Ara4N to lipid A. The modified arabinose is attached to lipid A and is required for resistance to polymyxin and cationic antimicrobial peptides. The chain is Undecaprenyl phosphate-alpha-4-amino-4-deoxy-L-arabinose arabinosyl transferase from Enterobacter sp. (strain 638).